The chain runs to 309 residues: Mas-related G-protein coupled receptor member E (309 aa).

Topologically, residues M1–T21 are extracellular. A glycan (N-linked (GlcNAc...) asparagine) is linked at N19. Residues I22–W42 traverse the membrane as a helical segment. At L43–D59 the chain is on the cytoplasmic side. The chain crosses the membrane as a helical span at residues V60–L80. Residues Q81–H91 lie on the Extracellular side of the membrane. Residues I92–I112 traverse the membrane as a helical segment. The Cytoplasmic portion of the chain corresponds to S113 to R132. A helical transmembrane segment spans residues Y133–L153. At S154 to L168 the chain is on the extracellular side. The helical transmembrane segment at C169–V189 threads the bilayer. Residues T190–T212 lie on the Cytoplasmic side of the membrane. Residues L213 to L233 traverse the membrane as a helical segment. Residues S234–H247 are Extracellular-facing. N236 is a glycosylation site (N-linked (GlcNAc...) asparagine). Residues F248–G268 form a helical membrane-spanning segment. At S269 to V309 the chain is on the cytoplasmic side.

This sequence belongs to the G-protein coupled receptor 1 family. Mas subfamily.

The protein resides in the cell membrane. Its function is as follows. Orphan receptor. May regulate nociceptor function and/or development, including the sensation or modulation of pain. The sequence is that of Mas-related G-protein coupled receptor member E (Mrgpre) from Rattus norvegicus (Rat).